A 71-amino-acid polypeptide reads, in one-letter code: UPF0346 protein SZO_05010 (71 aa).

The protein belongs to the UPF0346 family.

This chain is UPF0346 protein SZO_05010, found in Streptococcus equi subsp. zooepidemicus (strain H70).